The following is a 284-amino-acid chain: Zinc finger protein ZAT3 (284 aa).

A compositionally biased stretch (basic and acidic residues) spans 1 to 12; it reads MNNNHSYDDRSF. Residues 1 to 76 form a disordered region; sequence MNNNHSYDDR…KPDPNAPKIT (76 aa). Residues 18-37 show a composition bias toward polar residues; the sequence is PSNTSNPNPNLQFALSSSYD. The segment covering 47–62 has biased composition (low complexity); the sequence is TVASSSSSSPKSASKP. 3 consecutive C2H2-type zinc fingers follow at residues 77–99, 162–184, and 222–244; these read RPCT…MRCH, FECG…RASH, and HKCN…MRCH.

In terms of assembly, interacts (via the EAR motif) with TPL. Expressed exclusively in pollen.

The protein resides in the nucleus. Mediates the regulation of male germ cell division by DUO1. The polypeptide is Zinc finger protein ZAT3 (Arabidopsis thaliana (Mouse-ear cress)).